Consider the following 1050-residue polypeptide: MARLLTKSSQVFDFLADRLSVRKSRRFWETQENLESSTPLLQEPQQSYRSNSFNELPPLSRSVTFAENEQPNEAVKLGTFEGCFIPTTLNVLSILLYLRFPWIIGEAGVLKTLLMLFISYAVGIFTSLSISAICTNGMVRGGGAYYAVSRSIGPELGGSIGLIFYVGQILNTGMNISGFVEPIISIFGKESGTISQFLPEGYWWVFLYTTCVLAMCCILCCLGSAIFAKASNALFVVIILSTISIPISSIFVHPFKDPSLLVHFTGLKWSTLMKNLASAYTENEKGTGYESFKSTFGVFFPATAGLLAGASMSGDLKAPSRSIPKGTISSQATTFLLYLLVILCVGASVTRTGLLLDMDVMEHISLHPLFIISGILSSGAFSSFMGIFGAAKLLQAIARDDLIPGMFFFAKGSSYDDIPYVAIGVTYLITQISLFWDINMLSSMITMTFLLTFGFINLSCFLLRISSTPNFRPTFRYFNRRTTLVGTILSFGVMFYVDRLNAFISFLIAGILVVVIYFTCPPKNWGDVSQGIIYHQLRKYLLQTNKARENIKFWRPQILLLINNPNRSENVIRFCNSLKKGSLYILGHVIVSDDFQASMDDLRKQQRLWHQFVLDRGIKAFVELTIAPDEVWGIRGLISSAGLGGIRPNIAVLTFINTNYRRHRIYSGSSFSLENTSEESESDSKKEFVEHDILPVKWVQILEDMLVGSVDVMVTNGFDRLNWPKRKGEKQYIDMFPIHRISGVGSEVNESTPTFATNFETYTMVFQLSWILHTASDWKQGCRLRLITLVEFENEIEAERESMHQMLETFRIKADVVVLCLAAMNLDAYRYIVKNEHVRPSKSSELENLLKDDSWWQEEKKRRGNTVDSLGPIRFPRRMSGYNFRSASFDKSAPPLSVPLSFRLGPHMHSVKSFETESSFGNRSLSPKQENRRTYSDSTIESSLMPNVVREDSSSDRLAPKKKIGRDYSKEKLTFNDLSSRSQYIIMNEIVLKHTKNTSVLFTVLPAPLADTHKSFRKSEEYVDDLLIFMEGLPPCALIHSKSLTITTAL.

The Cytoplasmic portion of the chain corresponds to 1–83 (MARLLTKSSQ…AVKLGTFEGC (83 aa)). 2 positions are modified to phosphoserine: Ser9 and Ser60. Thr64 carries the post-translational modification Phosphothreonine. The helical transmembrane segment at 84–104 (FIPTTLNVLSILLYLRFPWII) threads the bilayer. The Extracellular portion of the chain corresponds to 105 to 112 (GEAGVLKT). A helical membrane pass occupies residues 113–133 (LLMLFISYAVGIFTSLSISAI). Topologically, residues 134 to 146 (CTNGMVRGGGAYY) are cytoplasmic. The helical transmembrane segment at 147 to 169 (AVSRSIGPELGGSIGLIFYVGQI) threads the bilayer. Topologically, residues 170–202 (LNTGMNISGFVEPIISIFGKESGTISQFLPEGY) are extracellular. The N-linked (GlcNAc...) asparagine glycan is linked to Asn175. Residues 203–223 (WWVFLYTTCVLAMCCILCCLG) traverse the membrane as a helical segment. At 224–232 (SAIFAKASN) the chain is on the cytoplasmic side. The chain crosses the membrane as a helical span at residues 233 to 253 (ALFVVIILSTISIPISSIFVH). The Extracellular portion of the chain corresponds to 254-295 (PFKDPSLLVHFTGLKWSTLMKNLASAYTENEKGTGYESFKST). Position 270 is a phosphoserine (Ser270). The residue at position 271 (Thr271) is a Phosphothreonine. Residues 296 to 316 (FGVFFPATAGLLAGASMSGDL) traverse the membrane as a helical segment. The Cytoplasmic portion of the chain corresponds to 317–334 (KAPSRSIPKGTISSQATT). A helical transmembrane segment spans residues 335 to 355 (FLLYLLVILCVGASVTRTGLL). Topologically, residues 356–368 (LDMDVMEHISLHP) are extracellular. The helical transmembrane segment at 369–389 (LFIISGILSSGAFSSFMGIFG) threads the bilayer. Topologically, residues 390–417 (AAKLLQAIARDDLIPGMFFFAKGSSYDD) are cytoplasmic. Residues 418 to 438 (IPYVAIGVTYLITQISLFWDI) form a helical membrane-spanning segment. Residues 439–442 (NMLS) are Extracellular-facing. A helical membrane pass occupies residues 443–463 (SMITMTFLLTFGFINLSCFLL). At 464 to 480 (RISSTPNFRPTFRYFNR) the chain is on the cytoplasmic side. A helical transmembrane segment spans residues 481-497 (RTTLVGTILSFGVMFYV). Residues 498 to 499 (DR) are Extracellular-facing. The helical transmembrane segment at 500-520 (LNAFISFLIAGILVVVIYFTC) threads the bilayer. The Cytoplasmic segment spans residues 521 to 1050 (PPKNWGDVSQ…SKSLTITTAL (530 aa)). Ser901 bears the Phosphoserine mark. A disordered region spans residues 915–943 (ETESSFGNRSLSPKQENRRTYSDSTIESS). Residues 916-928 (TESSFGNRSLSPK) show a composition bias toward polar residues. Ser936 is modified (phosphoserine). Thr939 bears the Phosphothreonine mark.

This sequence belongs to the SLC12A transporter family.

It localises to the membrane. This is an uncharacterized protein from Schizosaccharomyces pombe (strain 972 / ATCC 24843) (Fission yeast).